The primary structure comprises 111 residues: uncharacterized protein (111 aa).

Helical transmembrane passes span 18–38 (LNVF…LFVS) and 42–62 (LALA…RTFP).

It localises to the membrane. This is an uncharacterized protein from Saccharomyces cerevisiae (strain ATCC 204508 / S288c) (Baker's yeast).